Reading from the N-terminus, the 249-residue chain is Serine 3-dehydrogenase (249 aa).

NADP(+) is bound at residue 6-30 (LITGATSGFGQATARRFVKEGWKVI). Ser-135 contributes to the substrate binding site. Tyr-148 acts as the Proton acceptor in catalysis.

It belongs to the short-chain dehydrogenases/reductases (SDR) family. As to quaternary structure, homotetramer.

The enzyme catalyses L-serine + NADP(+) = aminoacetaldehyde + CO2 + NADPH. Its function is as follows. Catalyzes the oxidation of the hydroxyl group of serine to form 2-aminomalonate semialdehyde which is spontaneously converted into 2-aminoacetaldehyde and CO(2). Also acts on D-serine, L-glycerate, D-glycerate and 2-methyl-DL-serine. Does not act on O-methyl-DL-serine and L-threonine. In Agrobacterium fabrum (strain C58 / ATCC 33970) (Agrobacterium tumefaciens (strain C58)), this protein is Serine 3-dehydrogenase (sdh).